The primary structure comprises 381 residues: Succinyl-diaminopimelate desuccinylase (381 aa).

Zn(2+) is bound at residue histidine 68. The active site involves aspartate 70. Zn(2+) is bound at residue aspartate 101. The active-site Proton acceptor is glutamate 135. Positions 136, 164, and 350 each coordinate Zn(2+).

It belongs to the peptidase M20A family. DapE subfamily. In terms of assembly, homodimer. Requires Zn(2+) as cofactor. It depends on Co(2+) as a cofactor.

The catalysed reaction is N-succinyl-(2S,6S)-2,6-diaminopimelate + H2O = (2S,6S)-2,6-diaminopimelate + succinate. Its pathway is amino-acid biosynthesis; L-lysine biosynthesis via DAP pathway; LL-2,6-diaminopimelate from (S)-tetrahydrodipicolinate (succinylase route): step 3/3. Functionally, catalyzes the hydrolysis of N-succinyl-L,L-diaminopimelic acid (SDAP), forming succinate and LL-2,6-diaminopimelate (DAP), an intermediate involved in the bacterial biosynthesis of lysine and meso-diaminopimelic acid, an essential component of bacterial cell walls. The sequence is that of Succinyl-diaminopimelate desuccinylase from Neisseria gonorrhoeae (strain NCCP11945).